The chain runs to 257 residues: Insulin-induced gene 1 protein (257 aa).

The Cytoplasmic segment spans residues 1–64 (MPRLHDHVWS…ARPGSWHHDL (64 aa)). Residues 32–54 (CPQGSGAPEPAPRSPRAGTAGCG) are disordered. The chain crosses the membrane as a helical span at residues 65–87 (VQRSLVLFSFGVVLALVLNLLQI). Topologically, residues 88-106 (QRNVTLFPDEVIATIFSSA) are extracellular. The helical transmembrane segment at 107-124 (WWVPPCCGTAAAVVGLLY) threads the bilayer. Topologically, residues 125–139 (PCIDSHLGEPHKFKR) are cytoplasmic. Glycyl lysine isopeptide (Lys-Gly) (interchain with G-Cter in ubiquitin) cross-links involve residues Lys136 and Lys138. Residues 140 to 162 (EWASVMRCIAVFVGINHASAKLD) traverse the membrane as a helical segment. The Extracellular portion of the chain corresponds to 163-165 (FAN). Residues 166–184 (NVQLSLTLAALSLGLWWTF) form a helical membrane-spanning segment. Topologically, residues 185–189 (DRSRS) are cytoplasmic. Ser187 is subject to Phosphoserine. Residues 190–211 (GLGLGITIAFLATLITQFLVYN) form a helical membrane-spanning segment. Topologically, residues 212–225 (GVYQYTSPDFLYIR) are extracellular. Residues 226–243 (SWLPCIFFSGGVTVGNIG) form a helical membrane-spanning segment. At 244 to 257 (RQLAMGVPEKPHSD) the chain is on the cytoplasmic side. A KxHxx motif is present at residues 251 to 257 (PEKPHSD).

It belongs to the INSIG family. As to quaternary structure, interacts with SCAP; interaction is direct and only takes place in the presence of sterols; it prevents interaction between SCAP and the coat protein complex II (COPII). Associates with the SCAP-SREBP complex (composed of SCAP and SREBF1/SREBP1 or SREBF2/SREBP2); association is mediated via its interaction with SCAP and only takes place in the presence of sterols. Interaction with SCAP is mutually exclusive with PAQR3. Interacts with HMGCR (via its SSD); the interaction, accelerated by sterols, leads to the recruitment of HMGCR to AMFR/gp78 for its ubiquitination by the sterol-mediated ERAD pathway. Interacts with AMFR/gp78 (via its membrane domain); the interaction recruits HMCR at the ER membrane for its ubiquitination and degradation by the sterol-mediated ERAD pathway. Interacts with SOAT2/ACAT2; leading to promote recruitment of AMFR/gp78 and subsequent ubiquitination of SOAT2/ACAT2. Interacts with RNF139. Interacts with RNF145. Phosphorylation at Ser-187 by PCK1 reduces binding to oxysterol, disrupting the interaction between INSIG1 and SCAP, thereby promoting nuclear translocation of SREBP proteins (SREBF1/SREBP1 or SREBF2/SREBP2) and subsequent transcription of downstream lipogenesis-related genes. Post-translationally, ubiquitinated by AMFR/gp78 in response to sterol deprivation, leading to its degradation: when the SCAP-SREBP complex becomes dissociated from INSIG1, INSIG1 is then ubiquitinated and degraded in proteasomes. Although ubiquitination is required for rapid INSIG1 degradation, it is not required for release of the SCAP-SREBP complex. Ubiquitinated by RNF139.

The protein localises to the endoplasmic reticulum membrane. Its function is as follows. Oxysterol-binding protein that mediates feedback control of cholesterol synthesis by controlling both endoplasmic reticulum to Golgi transport of SCAP and degradation of HMGCR. Acts as a negative regulator of cholesterol biosynthesis by mediating the retention of the SCAP-SREBP complex in the endoplasmic reticulum, thereby blocking the processing of sterol regulatory element-binding proteins (SREBPs) SREBF1/SREBP1 and SREBF2/SREBP2. Binds oxysterol, including 25-hydroxycholesterol, regulating interaction with SCAP and retention of the SCAP-SREBP complex in the endoplasmic reticulum. In presence of oxysterol, interacts with SCAP, retaining the SCAP-SREBP complex in the endoplasmic reticulum, thereby preventing SCAP from escorting SREBF1/SREBP1 and SREBF2/SREBP2 to the Golgi. Sterol deprivation or phosphorylation by PCK1 reduce oxysterol-binding, disrupting the interaction between INSIG1 and SCAP, thereby promoting Golgi transport of the SCAP-SREBP complex, followed by processing and nuclear translocation of SREBF1/SREBP1 and SREBF2/SREBP2. Also regulates cholesterol synthesis by regulating degradation of HMGCR: initiates the sterol-mediated ubiquitin-mediated endoplasmic reticulum-associated degradation (ERAD) of HMGCR via recruitment of the reductase to the ubiquitin ligases AMFR/gp78 and/or RNF139. Also regulates degradation of SOAT2/ACAT2 when the lipid levels are low: initiates the ubiquitin-mediated degradation of SOAT2/ACAT2 via recruitment of the ubiquitin ligases AMFR/gp78. This Cricetulus griseus (Chinese hamster) protein is Insulin-induced gene 1 protein.